We begin with the raw amino-acid sequence, 545 residues long: Chaperonin GroEL (545 aa).

Residues 29-32, Lys-50, 86-90, Gly-414, 477-479, and Asp-493 each bind ATP; these read TMGP, DGTTT, and DAA.

It belongs to the chaperonin (HSP60) family. In terms of assembly, forms a cylinder of 14 subunits composed of two heptameric rings stacked back-to-back. Interacts with the co-chaperonin GroES.

It is found in the cytoplasm. It carries out the reaction ATP + H2O + a folded polypeptide = ADP + phosphate + an unfolded polypeptide.. In terms of biological role, together with its co-chaperonin GroES, plays an essential role in assisting protein folding. The GroEL-GroES system forms a nano-cage that allows encapsulation of the non-native substrate proteins and provides a physical environment optimized to promote and accelerate protein folding. This Campylobacter jejuni subsp. jejuni serotype O:6 (strain 81116 / NCTC 11828) protein is Chaperonin GroEL.